A 665-amino-acid polypeptide reads, in one-letter code: Target of rapamycin complex 2 subunit sin1 (665 aa).

Ser62 is subject to Phosphoserine. 2 stretches are compositionally biased toward polar residues: residues 65–83 (IVAN…TKQV) and 100–109 (YATSDLSESS). Positions 65-112 (IVANDTVSNVRKPSDTKQVNGAGGQVNHSRAEDSDYATSDLSESSDVG) are disordered. Phosphoserine is present on Ser133. In terms of domain architecture, CRIM spans 255 to 392 (TSALRALLEH…ATPAQIKENQ (138 aa)). A disordered region spans residues 395 to 433 (YPFKSKHPTSIPEANNKTHIRHTSSTSSQSQKQAQDVKD). Ser404, Ser490, Ser502, and Ser530 each carry phosphoserine. Residues 517 to 537 (RDKKGSTQQLPTSSPQNSVYG) form a disordered region. The span at 522–536 (STQQLPTSSPQNSVY) shows a compositional bias: polar residues. In terms of domain architecture, SIN1-type PH spans 558–659 (TYQEFLVWKR…IVSRIRALMN (102 aa)).

It belongs to the SIN1 family. As to quaternary structure, the target of rapamycin complex 2 (TORC2) is composed of at least bit61, pop3/wat1, sin1, ste20 and tor1. Interacts with the sty1 MAP kinase. In terms of processing, phosphorylated; under environmental stress. Either Ser-61 or Ser-62 and Ser-298, Ser-299 or Ser-301 are phosphorylated as well.

In terms of biological role, component of the mechanistic target of rapamycin complex 2 (mTORC2), which regulates multiple cellular processes to control cell growth in response to environmental signals. In response to signals, TORC2 phosphorylates AGC protein kinase family members, such as gad8. TORC2 is required for cell survival under various stress conditions. TORC2 positively controls G1 cell-cycle arrest, sexual development and amino acid uptake. Positively regulates amino acid uptake through the control of expression of amino acid permeases. Within the mTORC2 complex, sin1 acts as a substrate adapter which recognizes and binds AGC protein kinase family members for phosphorylation by tor1. The polypeptide is Target of rapamycin complex 2 subunit sin1 (Schizosaccharomyces pombe (strain 972 / ATCC 24843) (Fission yeast)).